Consider the following 335-residue polypeptide: MEQPWPPPGPWSFPRTGGETEEESDLDVSPSSSHYSPVPDGGAQMYSHGIELACQKQKEFVKSSVACKWNLAEAQQKLGSLALHNSESLDQEHAKAQTAVSELRQREEEWRQKEEALVQRERMCLWNMDAISKDVFNKSFINQDKRKTEEEDKSQSFMQKYEQKIRHFGMLSRWDDSQRFLSDHPHLVCEETAKYLILWCFHLEAEQKGALMEQIAHQAVVMQFIMEMAKNCNVDPRGCFRLFFQKAKAEEEGYFEAFKNELEAFKSRVRLYAQSQSLQPVTVQNHVPHSGVGCIGSLESLPQNPDSLQCCTPAPLCSVDSVVHKEDDDRMMDTV.

The segment covering 1–11 (MEQPWPPPGPW) has biased composition (pro residues). Positions 1–42 (MEQPWPPPGPWSFPRTGGETEEESDLDVSPSSSHYSPVPDGG) are disordered. The segment at 2–170 (EQPWPPPGPW…YEQKIRHFGM (169 aa)) is self-association. A compositionally biased stretch (low complexity) spans 27–40 (DVSPSSSHYSPVPD). Residues Ser32 and Ser88 each carry the phosphoserine modification. A coiled-coil region spans residues 84 to 120 (HNSESLDQEHAKAQTAVSELRQREEEWRQKEEALVQR). A self-association and interaction with Hsp90 region spans residues 147–276 (KTEEEDKSQS…SRVRLYAQSQ (130 aa)). Positions 266-335 (KSRVRLYAQS…EDDDRMMDTV (70 aa)) are interaction with Hsp70. Residues 277–335 (SLQPVTVQNHVPHSGVGCIGSLESLPQNPDSLQCCTPAPLCSVDSVVHKEDDDRMMDTV) are required for interaction with STIP1.

It belongs to the CDC37 family. In terms of assembly, self-associates. Forms complexes with Hsp70 and Hsp90. Interacts with CDC37, FKBP4, PPID and STIP1.

The protein localises to the cytoplasm. Co-chaperone that binds to numerous proteins and promotes their interaction with Hsp70 and Hsp90. The protein is Hsp90 co-chaperone Cdc37-like 1 (Cdc37l1) of Mus musculus (Mouse).